Here is a 390-residue protein sequence, read N- to C-terminus: Homoserine O-succinyltransferase (390 aa).

The AB hydrolase-1 domain maps to 59–369 (NAVLVCHALN…PHGHDAFLLD (311 aa)). The active-site Nucleophile is S165. Position 235 (R235) interacts with substrate. Catalysis depends on residues D330 and H363. D364 contacts substrate.

The protein belongs to the AB hydrolase superfamily. MetX family. In terms of assembly, homodimer.

Its subcellular location is the cytoplasm. It catalyses the reaction L-homoserine + succinyl-CoA = O-succinyl-L-homoserine + CoA. The protein operates within amino-acid biosynthesis; L-methionine biosynthesis via de novo pathway; O-succinyl-L-homoserine from L-homoserine: step 1/1. In terms of biological role, transfers a succinyl group from succinyl-CoA to L-homoserine, forming succinyl-L-homoserine. This chain is Homoserine O-succinyltransferase, found in Cupriavidus metallidurans (strain ATCC 43123 / DSM 2839 / NBRC 102507 / CH34) (Ralstonia metallidurans).